The primary structure comprises 453 residues: Verruculogen prenyltransferase (453 aa).

Glutamate 89 contacts substrate. Arginine 102, lysine 194, tyrosine 196, lysine 273, tyrosine 275, tyrosine 378, tyrosine 443, and tyrosine 447 together coordinate dimethylallyl diphosphate.

This sequence belongs to the tryptophan dimethylallyltransferase family.

The enzyme catalyses verruculogen + dimethylallyl diphosphate = fumitremorgin A + diphosphate. It participates in mycotoxin biosynthesis. Functionally, verruculogen prenyltransferase; part of the gene cluster that mediates the biosynthesis of fumitremorgins, indole alkaloids that carry not only intriguing chemical structures, but also interesting biological and pharmacological activities. The biosynthesis of fumitremorgin-type alkaloids begins by condensation of the two amino acids L-tryptophan and L-proline to brevianamide F, catalyzed by the non-ribosomal peptide synthetase ftmPS/ftmA. Brevianamide F is then prenylated by the prenyltransferase ftmPT1/ftmB in the presence of dimethylallyl diphosphate, resulting in the formation of tryprostatin B. The three cytochrome P450 monooxygenases, ftmP450-1/ftmC, ftmP450-2/ftmE and ftmP450-3/FtmG, are responsible for the conversion of tryprostatin B to 6-hydroxytryprostatin B, tryprostatin A to fumitremorgin C and fumitremorgin C to 12,13-dihydroxyfumitremorgin C, respectively. The putative methyltransferase ftmMT/ftmD is expected for the conversion of 6-hydroxytryprostatin B to tryprostatin A. FtmPT2/FtmH catalyzes the prenylation of 12,13-dihydroxyfumitre-morgin C in the presence of dimethylallyl diphosphate, resulting in the formation of fumitremorgin B. Fumitremorgin B is further converted to verruculogen by ftmOx1/ftmF via the insertion of an endoperoxide bond between the two prenyl moieties. Finally, verruculogen is further converted to fumitremorgin A by the verruculogen prenyltransferase ftmPT3. The chain is Verruculogen prenyltransferase from Neosartorya fischeri (strain ATCC 1020 / DSM 3700 / CBS 544.65 / FGSC A1164 / JCM 1740 / NRRL 181 / WB 181) (Aspergillus fischerianus).